A 202-amino-acid chain; its full sequence is MSRYRGPRVKIIRRLGALPGLTNKIPQLKSGYTNQSVSNKKISQYRIRLEEKQKLRFHYGITERQLLKYVRIARGAKGSTGQISLQSSEMRLDNIIFRLGIAPTIPGARQLVNHRHILVNNNIVNIPSYRCKPQDFITIKNSQKSQTIITKNIELSQKYQIPNHLTFNSLEKKGLVNQILDRESIGLKINELLVVEYYSRQA.

Positions Met-90–Lys-158 constitute an S4 RNA-binding domain.

This sequence belongs to the universal ribosomal protein uS4 family. As to quaternary structure, part of the 30S ribosomal subunit. Contacts protein S5. The interaction surface between S4 and S5 is involved in control of translational fidelity.

It is found in the plastid. The protein localises to the chloroplast. Functionally, one of the primary rRNA binding proteins, it binds directly to 16S rRNA where it nucleates assembly of the body of the 30S subunit. Its function is as follows. With S5 and S12 plays an important role in translational accuracy. The sequence is that of Small ribosomal subunit protein uS4c (rps4) from Marchantia romanica (Liverwort).